Consider the following 234-residue polypeptide: Dienlactone hydrolase 2 (234 aa).

Catalysis depends on residues cysteine 143, aspartate 167, and histidine 199.

It belongs to the dienelactone hydrolase family.

Its pathway is xenobiotic degradation. Its function is as follows. Dienlactone hydrolase; part of the Fusarium detoxification of benzoxazolinone cluster 2 (FDB2) involved in the degradation of benzoxazolinones produced by the host plant. Maize, wheat, and rye produce the 2 benzoxazinone phytoanticipins 2,4-dihy-droxy-7-methoxy-1,4-benzoxazin-3-one (DIMBOA) and 2,4-dihydroxy-1,4-benzoxazin-3-one (DIBOA) that, due to their inherent instability once released, spontaneously degrade to the more stable corresponding benzoxazolinones, 6-methoxy-2-benzoxazolinone (MBOA) and 2-benzoxazolinone (BOA), respectively. The first step in the detoxification of benzoxazolinones involves the hydrolysis of the cyclic ester bond of benzoxazolinones by the FDB1 cluster gamma-lactamase MBL1 to aminophenols. MBL1 is able to convert BOA into 2-aminophenol (2-AP), as well as MBOA into 5-methoxy-2-aminophenol (2-AMP). The FDB2 cluster N-malonyltransferase FDB2/NAT1 then metabolizes aminophenols via N-malonylation to non-toxic malonamic acids. FDB2/NAT1 converts 2-AP into N-(2-hydroxyphenyl) malonamic acid (HPMA) and 2-AMP into N-(2-hydroxy-4-methoxyphenyl) malonamic acid (HMPMA). The duplicated dienlactone hydrolases DLH1 and DLH2 may provide redundant function for hydrolyzing the lactone moiety in the BOA molecule. The roles of the amidases and other enzymes encoded by the 2 FDB clusters have not been identified so far. The protein is Dienlactone hydrolase 2 of Gibberella moniliformis (strain M3125 / FGSC 7600) (Maize ear and stalk rot fungus).